Consider the following 137-residue polypeptide: Phosphoribosyl-AMP cyclohydrolase (137 aa).

Asp84 serves as a coordination point for Mg(2+). Residue Cys85 participates in Zn(2+) binding. Residues Asp86 and Asp88 each coordinate Mg(2+). 2 residues coordinate Zn(2+): Cys101 and Cys108.

The protein belongs to the PRA-CH family. Homodimer. The cofactor is Mg(2+). Zn(2+) serves as cofactor.

The protein resides in the cytoplasm. It catalyses the reaction 1-(5-phospho-beta-D-ribosyl)-5'-AMP + H2O = 1-(5-phospho-beta-D-ribosyl)-5-[(5-phospho-beta-D-ribosylamino)methylideneamino]imidazole-4-carboxamide. The protein operates within amino-acid biosynthesis; L-histidine biosynthesis; L-histidine from 5-phospho-alpha-D-ribose 1-diphosphate: step 3/9. Catalyzes the hydrolysis of the adenine ring of phosphoribosyl-AMP. The chain is Phosphoribosyl-AMP cyclohydrolase from Chlorobium phaeovibrioides (strain DSM 265 / 1930) (Prosthecochloris vibrioformis (strain DSM 265)).